The primary structure comprises 489 residues: Leukocyte immunoglobulin-like receptor subfamily A member 1 (489 aa).

A signal peptide spans 1-16 (MTPIVTVLICLRLSLG). The Extracellular segment spans residues 17-461 (PRTHVQAGTL…SHPQDYTVEN (445 aa)). 4 Ig-like C2-type domains span residues 27–116 (PKPT…PLEL), 119–224 (TGAY…GVSK), 226–315 (PSLS…DPLD), and 326–415 (PFIS…SDSL). Cysteine 49 and cysteine 98 are disulfide-bonded. The N-linked (GlcNAc...) asparagine glycan is linked to asparagine 140. Intrachain disulfides connect cysteine 145/cysteine 197, cysteine 157/cysteine 167, and cysteine 246/cysteine 297. N-linked (GlcNAc...) asparagine glycans are attached at residues asparagine 281, asparagine 302, and asparagine 341. A disulfide bond links cysteine 346 and cysteine 397. The tract at residues 425–453 (TLSPPQNKSDSKAGAANTLSPSQNKTASH) is disordered. Residues asparagine 431 and asparagine 448 are each glycosylated (N-linked (GlcNAc...) asparagine). Residues 441-453 (NTLSPSQNKTASH) show a composition bias toward polar residues. Residues 462–482 (LIRMGIAGLVLVVLGILLFEA) traverse the membrane as a helical segment. Over 483–489 (QHSQRSL) the chain is Cytoplasmic.

As to expression, detected in monocytes and B-cells.

The protein localises to the membrane. Its function is as follows. May act as receptor for class I MHC antigens. This Homo sapiens (Human) protein is Leukocyte immunoglobulin-like receptor subfamily A member 1 (LILRA1).